A 448-amino-acid polypeptide reads, in one-letter code: Phosphoglucosamine mutase (448 aa).

The Phosphoserine intermediate role is filled by Ser-100. Positions 100, 240, 242, and 244 each coordinate Mg(2+). Phosphoserine is present on Ser-100.

It belongs to the phosphohexose mutase family. The cofactor is Mg(2+). Post-translationally, activated by phosphorylation.

It carries out the reaction alpha-D-glucosamine 1-phosphate = D-glucosamine 6-phosphate. Its function is as follows. Catalyzes the conversion of glucosamine-6-phosphate to glucosamine-1-phosphate. The chain is Phosphoglucosamine mutase from Clostridium perfringens (strain ATCC 13124 / DSM 756 / JCM 1290 / NCIMB 6125 / NCTC 8237 / Type A).